The primary structure comprises 263 residues: Outer membrane lipoprotein 3 (263 aa).

The first 19 residues, 1-19, serve as a signal peptide directing secretion; sequence MKIMKLAGAVAIFSLFLTA. A lipid anchor (N-palmitoyl cysteine) is attached at Cys-20. Residue Cys-20 is the site of S-diacylglycerol cysteine attachment.

It belongs to the NlpA lipoprotein family.

Its subcellular location is the cell outer membrane. The sequence is that of Outer membrane lipoprotein 3 (plpC) from Mannheimia haemolytica (Pasteurella haemolytica).